A 122-amino-acid chain; its full sequence is Large ribosomal subunit protein uL14 (122 aa).

Belongs to the universal ribosomal protein uL14 family. In terms of assembly, part of the 50S ribosomal subunit. Forms a cluster with proteins L3 and L19. In the 70S ribosome, L14 and L19 interact and together make contacts with the 16S rRNA in bridges B5 and B8.

Functionally, binds to 23S rRNA. Forms part of two intersubunit bridges in the 70S ribosome. This Thermotoga petrophila (strain ATCC BAA-488 / DSM 13995 / JCM 10881 / RKU-1) protein is Large ribosomal subunit protein uL14.